The chain runs to 263 residues: NADH dehydrogenase [ubiquinone] iron-sulfur protein 3, mitochondrial (263 aa).

The transit peptide at 1-35 (MVAAVARLWWRGLLGASALTRGAGRPSVLLLPVRR) directs the protein to the mitochondrion.

The protein belongs to the complex I 30 kDa subunit family. Core subunit of respiratory chain NADH dehydrogenase (Complex I) which is composed of 45 different subunits. Interacts with NDUFAF3. Interacts with RAB5IF. Found in subcomplexes containing subunits NDUFS2, MT-ND1 and NDUFA13.

It is found in the mitochondrion inner membrane. The enzyme catalyses a ubiquinone + NADH + 5 H(+)(in) = a ubiquinol + NAD(+) + 4 H(+)(out). Functionally, core subunit of the mitochondrial membrane respiratory chain NADH dehydrogenase (Complex I) which catalyzes electron transfer from NADH through the respiratory chain, using ubiquinone as an electron acceptor. Essential for the catalytic activity and assembly of complex I. The chain is NADH dehydrogenase [ubiquinone] iron-sulfur protein 3, mitochondrial (NDUFS3) from Pongo pygmaeus (Bornean orangutan).